Consider the following 622-residue polypeptide: Sodium/potassium/calcium exchanger 4 (622 aa).

The first 38 residues, 1–38 (MALRGLIRQSKVRRRREMLPQQVGFVCAVLALVCCASG), serve as a signal peptide directing secretion. Residues 39-97 (LFGSLGHKTASAGKHVLLDTWRNRKLMAPINGTPLAKNCTDPAIHEFPTDLFSNKERQH) are Extracellular-facing. Asn-76 carries N-linked (GlcNAc...) asparagine glycosylation. The helical transmembrane segment at 98 to 118 (GAVLLHILGALYMFYALAIVC) threads the bilayer. Topologically, residues 119-142 (DDFFVPSLEKICEKLHLSEDVAGA) are cytoplasmic. Residues 139 to 179 (VAGATFMAAGSSTPELFASVIGVFITHGDVGVGTIVGSAVF) form an Alpha-1 repeat. Residues 143–163 (TFMAAGSSTPELFASVIGVFI) form a helical membrane-spanning segment. Residues 164 to 172 (THGDVGVGT) lie on the Extracellular side of the membrane. Residues 173 to 193 (IVGSAVFNILCIIGVCGLFAG) form a helical membrane-spanning segment. Residues 194-200 (QVVRLTW) lie on the Cytoplasmic side of the membrane. The helical transmembrane segment at 201 to 221 (WAVCRDSVYYTLSVIVLIAFI) threads the bilayer. Residues 222–224 (YDE) are Extracellular-facing. A helical membrane pass occupies residues 225 to 245 (EIVWWEGLVLIILYVFYILIM). The Cytoplasmic portion of the chain corresponds to 246-457 (KYNMKMQTFF…RWEKFFMVTF (212 aa)). The tract at residues 358 to 408 (ANGVNSKPLQNGRHENMENGNVPVENPEDPQQGQEQQPPPQPPPPEPESVE) is disordered. The segment covering 394 to 404 (QPPPQPPPPEP) has biased composition (pro residues). Residues 458–478 (ITATLWIAVFSYLMVWLVTII) form a helical membrane-spanning segment. Position 479 (Gly-479) is a topological domain, extracellular. A helical transmembrane segment spans residues 480 to 500 (YTLGIPDVIMGITFLAAGTSV). The Alpha-2 repeat unit spans residues 495 to 526 (AAGTSVPDCMASLIVARQGLGDMAVSNTIGSN). Residues 501–526 (PDCMASLIVARQGLGDMAVSNTIGSN) are Cytoplasmic-facing. The chain crosses the membrane as a helical span at residues 527–547 (VFDILVGLGIPWGLQTMVINY). The Extracellular portion of the chain corresponds to 548-557 (GSTVKINSRG). The helical transmembrane segment at 558–578 (LVYSVVLLLGSVALTVLGIHL) threads the bilayer. Over 579 to 586 (NKWRLDRK) the chain is Cytoplasmic. The helical transmembrane segment at 587–607 (LGIYVLVLYAVFLCFSIMIEF) threads the bilayer. The Extracellular segment spans residues 608 to 622 (NVFTFVNLPMCREDD).

This sequence belongs to the Ca(2+):cation antiporter (CaCA) (TC 2.A.19) family. SLC24A subfamily. Expressed in late secretory-stage and maturation-stage ameloblasts, with significantly increased expression during the late stages of amelogenesis (at protein level). Widely expressed in most regions of the brain, including hippocampus, neocortex, thalamus, striatum and olfactory bulb. Expressed in the olfactory sensory neurons.

The protein localises to the cell membrane. It localises to the cytoplasm. It catalyses the reaction Ca(2+)(out) + K(+)(out) + 4 Na(+)(in) = Ca(2+)(in) + K(+)(in) + 4 Na(+)(out). In terms of biological role, calcium, potassium:sodium antiporter that transports 1 Ca(2+) and 1 K(+) in exchange for 4 Na(+). Controls the rapid response termination and proper regulation of adaptation in olfactory sensory neurons (OSNs) which subsequently influences how odor information is encoded and perceived. May play a role in calcium transport during amelogenesis. The polypeptide is Sodium/potassium/calcium exchanger 4 (Mus musculus (Mouse)).